We begin with the raw amino-acid sequence, 135 residues long: Class I hydrophobin dewA (135 aa).

The signal sequence occupies residues 1–18; the sequence is MRFIVSLLAFTAAATATA. Disulfide bonds link Cys44-Cys114, Cys51-Cys108, Cys52-Cys84, and Cys115-Cys122. The N-linked (GlcNAc...) asparagine glycan is linked to Asn60.

The protein belongs to the fungal hydrophobin family. As to quaternary structure, forms homodimers at high concentrations, and these dimers are off-pathway to rodlet formation. Dissociation of the dimers into monomers, with resultant exposure of the hydrophobic face, is necessary for self-assembly to form functional amyloid fibrils called rodlets. Self-assembly into fibrillar rodlets occurs spontaneously at hydrophobic:hydrophilic interfaces and the rodlets further associate laterally to form amphipathic monolayers.

It is found in the secreted. Its subcellular location is the spore wall. Aerial growth, conidiation, and dispersal of filamentous fungi in the environment rely upon a capability of their secreting small amphipathic proteins called hydrophobins (HPBs) with low sequence identity. Class I can self-assemble into an outermost layer of rodlet bundles on aerial cell surfaces, conferring cellular hydrophobicity that supports fungal growth, development and dispersal; whereas Class II form highly ordered films at water-air interfaces through intermolecular interactions but contribute nothing to the rodlet structure. DewA is a class I hydrophobin that contributes to spore wall hydrophobicity. In Emericella nidulans (strain FGSC A4 / ATCC 38163 / CBS 112.46 / NRRL 194 / M139) (Aspergillus nidulans), this protein is Class I hydrophobin dewA.